A 467-amino-acid polypeptide reads, in one-letter code: ATP synthase subunit beta (467 aa).

156 to 163 (GGAGVGKT) contributes to the ATP binding site.

Belongs to the ATPase alpha/beta chains family. F-type ATPases have 2 components, CF(1) - the catalytic core - and CF(0) - the membrane proton channel. CF(1) has five subunits: alpha(3), beta(3), gamma(1), delta(1), epsilon(1). CF(0) has three main subunits: a(1), b(2) and c(9-12). The alpha and beta chains form an alternating ring which encloses part of the gamma chain. CF(1) is attached to CF(0) by a central stalk formed by the gamma and epsilon chains, while a peripheral stalk is formed by the delta and b chains.

The protein resides in the cell inner membrane. It catalyses the reaction ATP + H2O + 4 H(+)(in) = ADP + phosphate + 5 H(+)(out). Functionally, produces ATP from ADP in the presence of a proton gradient across the membrane. The catalytic sites are hosted primarily by the beta subunits. This Cupriavidus metallidurans (strain ATCC 43123 / DSM 2839 / NBRC 102507 / CH34) (Ralstonia metallidurans) protein is ATP synthase subunit beta.